A 152-amino-acid chain; its full sequence is Large ribosomal subunit protein bL9 (152 aa).

It belongs to the bacterial ribosomal protein bL9 family.

Functionally, binds to the 23S rRNA. In Mycobacterium bovis (strain ATCC BAA-935 / AF2122/97), this protein is Large ribosomal subunit protein bL9.